Reading from the N-terminus, the 813-residue chain is Leucine--tRNA ligase (813 aa).

The 'HIGH' region motif lies at 40–51 (SYPSGSKLHAGH). The short motif at 572–576 (KMSKS) is the 'KMSKS' region element. ATP is bound at residue Lys575.

This sequence belongs to the class-I aminoacyl-tRNA synthetase family.

It localises to the cytoplasm. The enzyme catalyses tRNA(Leu) + L-leucine + ATP = L-leucyl-tRNA(Leu) + AMP + diphosphate. This Clostridium botulinum (strain ATCC 19397 / Type A) protein is Leucine--tRNA ligase.